A 184-amino-acid chain; its full sequence is Putative manganese efflux pump MntP (184 aa).

A run of 6 helical transmembrane segments spans residues 12–32 (SIMAFALGMDAFSVGLGMGMI), 39–59 (IIYIGLVIGIFHMFMPLFGML), 63–83 (LLSGWLGLLATYIGGALLLVL), 99–119 (FIAPVGAGLVLFATSVSLDSF), 132–152 (VWMTILLFGFFSMILTWLGLL), and 164–184 (YSGALGGIILLAFGIKLLFPL).

The protein belongs to the MntP (TC 9.B.29) family.

Its subcellular location is the cell membrane. Functionally, probably functions as a manganese efflux pump. The sequence is that of Putative manganese efflux pump MntP from Bacillus pumilus (strain SAFR-032).